The following is a 261-amino-acid chain: tRNA pseudouridine synthase A (261 aa).

The Nucleophile role is filled by aspartate 51. Substrate is bound at residue tyrosine 109.

This sequence belongs to the tRNA pseudouridine synthase TruA family. As to quaternary structure, homodimer.

It catalyses the reaction uridine(38/39/40) in tRNA = pseudouridine(38/39/40) in tRNA. Its function is as follows. Formation of pseudouridine at positions 38, 39 and 40 in the anticodon stem and loop of transfer RNAs. This is tRNA pseudouridine synthase A from Shewanella sp. (strain W3-18-1).